Consider the following 749-residue polypeptide: Adenosylcobalamin-dependent ribonucleoside-triphosphate reductase (749 aa).

A disulfide bridge connects residues Cys-124 and Cys-427. The interval 152–163 (SMPFSFMFDQLM) is effector region-1. Positions 173-321 (TPNNVHQMPV…MGNMIGKTVV (149 aa)) are effector region-2. Catalysis depends on residues Cys-416 and Glu-418. The interval 573-634 (FHYARYLIQR…EPAFASAGEV (62 aa)) is adenosylcobalamin-binding-1. Residues 693–734 (FKQAPKEPIDAATYDAKCQEITADVAEKFAAMTGNHDQKDIE) are adenosylcobalamin-binding-2.

It belongs to the class II ribonucleoside-triphosphate reductase family. In terms of assembly, monomer. Adenosylcob(III)alamin is required as a cofactor.

The catalysed reaction is a 2'-deoxyribonucleoside 5'-triphosphate + [thioredoxin]-disulfide + H2O = a ribonucleoside 5'-triphosphate + [thioredoxin]-dithiol. With respect to regulation, allosterically regulated by ATP and dNTP. The chain is Adenosylcobalamin-dependent ribonucleoside-triphosphate reductase (rtpR) from Levilactobacillus brevis (strain ATCC 367 / BCRC 12310 / CIP 105137 / JCM 1170 / LMG 11437 / NCIMB 947 / NCTC 947) (Lactobacillus brevis).